We begin with the raw amino-acid sequence, 136 residues long: Glutaredoxin-C8 (136 aa).

One can recognise a Glutaredoxin domain in the interval 33-135 (SSFVKSTVKA…KLLNIDVKED (103 aa)). A disulfide bridge connects residues C53 and C56.

Belongs to the glutaredoxin family. CPYC subfamily.

It localises to the cytoplasm. Its function is as follows. Has a glutathione-disulfide oxidoreductase activity in the presence of NADPH and glutathione reductase. Reduces low molecular weight disulfides and proteins. The sequence is that of Glutaredoxin-C8 (GRXC8) from Oryza sativa subsp. japonica (Rice).